A 352-amino-acid chain; its full sequence is Phosphate acyltransferase (352 aa).

The protein belongs to the PlsX family. As to quaternary structure, homodimer. Probably interacts with PlsY.

It localises to the cytoplasm. The catalysed reaction is a fatty acyl-[ACP] + phosphate = an acyl phosphate + holo-[ACP]. Its pathway is lipid metabolism; phospholipid metabolism. Its function is as follows. Catalyzes the reversible formation of acyl-phosphate (acyl-PO(4)) from acyl-[acyl-carrier-protein] (acyl-ACP). This enzyme utilizes acyl-ACP as fatty acyl donor, but not acyl-CoA. The polypeptide is Phosphate acyltransferase (Brucella anthropi (strain ATCC 49188 / DSM 6882 / CCUG 24695 / JCM 21032 / LMG 3331 / NBRC 15819 / NCTC 12168 / Alc 37) (Ochrobactrum anthropi)).